The primary structure comprises 425 residues: Serine hydroxymethyltransferase (425 aa).

(6S)-5,6,7,8-tetrahydrofolate-binding positions include Leu123 and 127–129 (GHL). Lys232 bears the N6-(pyridoxal phosphate)lysine mark. Glu248 contacts (6S)-5,6,7,8-tetrahydrofolate.

The protein belongs to the SHMT family. As to quaternary structure, homodimer. Requires pyridoxal 5'-phosphate as cofactor.

The protein resides in the cytoplasm. It catalyses the reaction (6R)-5,10-methylene-5,6,7,8-tetrahydrofolate + glycine + H2O = (6S)-5,6,7,8-tetrahydrofolate + L-serine. The protein operates within one-carbon metabolism; tetrahydrofolate interconversion. It functions in the pathway amino-acid biosynthesis; glycine biosynthesis; glycine from L-serine: step 1/1. Functionally, catalyzes the reversible interconversion of serine and glycine with tetrahydrofolate (THF) serving as the one-carbon carrier. This reaction serves as the major source of one-carbon groups required for the biosynthesis of purines, thymidylate, methionine, and other important biomolecules. Also exhibits THF-independent aldolase activity toward beta-hydroxyamino acids, producing glycine and aldehydes, via a retro-aldol mechanism. The sequence is that of Serine hydroxymethyltransferase from Anaplasma phagocytophilum (strain HZ).